The following is a 180-amino-acid chain: MTVRLREKYQKEVVPALMEEFKFKSIMQVPRLVKIVVNVGVGEAVQNAKAIEAAVNDLATITGQKPVVTRAKKSVASFKLRAGMPIGAMVTLRGDRMYDFLDRLCSLALPRIRDFRGVSRSSFDGRGNYSLGLREQIVFPDIDYDKIDKIRGLEVAIVTSAPNDEQAYALLKRLGMPFRD.

The protein belongs to the universal ribosomal protein uL5 family. In terms of assembly, part of the 50S ribosomal subunit; part of the 5S rRNA/L5/L18/L25 subcomplex. Contacts the 5S rRNA and the P site tRNA. Forms a bridge to the 30S subunit in the 70S ribosome.

This is one of the proteins that bind and probably mediate the attachment of the 5S RNA into the large ribosomal subunit, where it forms part of the central protuberance. In the 70S ribosome it contacts protein S13 of the 30S subunit (bridge B1b), connecting the 2 subunits; this bridge is implicated in subunit movement. Contacts the P site tRNA; the 5S rRNA and some of its associated proteins might help stabilize positioning of ribosome-bound tRNAs. This chain is Large ribosomal subunit protein uL5, found in Chloroflexus aurantiacus (strain ATCC 29364 / DSM 637 / Y-400-fl).